A 398-amino-acid chain; its full sequence is Phosphoglycerate kinase (398 aa).

Substrate contacts are provided by residues 23 to 25, Arg-38, 61 to 64, Arg-120, and Arg-153; these read DLN and HFGR. ATP contacts are provided by residues Lys-203, Glu-325, and 355–358; that span reads GGDT.

This sequence belongs to the phosphoglycerate kinase family. In terms of assembly, monomer.

Its subcellular location is the cytoplasm. The enzyme catalyses (2R)-3-phosphoglycerate + ATP = (2R)-3-phospho-glyceroyl phosphate + ADP. The protein operates within carbohydrate degradation; glycolysis; pyruvate from D-glyceraldehyde 3-phosphate: step 2/5. The protein is Phosphoglycerate kinase of Mesorhizobium japonicum (strain LMG 29417 / CECT 9101 / MAFF 303099) (Mesorhizobium loti (strain MAFF 303099)).